The following is a 118-amino-acid chain: Large ribosomal subunit protein bL20 (118 aa).

Belongs to the bacterial ribosomal protein bL20 family.

Binds directly to 23S ribosomal RNA and is necessary for the in vitro assembly process of the 50S ribosomal subunit. It is not involved in the protein synthesizing functions of that subunit. The protein is Large ribosomal subunit protein bL20 of Thermus thermophilus (strain ATCC BAA-163 / DSM 7039 / HB27).